A 467-amino-acid chain; its full sequence is Sugar transporter ERD6-like 11 (467 aa).

12 helical membrane-spanning segments follow: residues 26 to 46, 75 to 95, 105 to 125, 128 to 148, 155 to 177, 183 to 203, 266 to 286, 301 to 321, 328 to 348, 359 to 379, 402 to 422, and 428 to 448; these read ITAC…SYGC, FLNV…VILG, FFCV…WLDL, ISLG…IAEI, GAFT…FFGT, VMAV…FFIP, LVVG…GITY, LGSM…LILV, PLLL…GVSF, LIPI…AFGI, IVAL…NFMF, and GTFY…WMLV.

The protein belongs to the major facilitator superfamily. Sugar transporter (TC 2.A.1.1) family.

The protein localises to the membrane. Sugar transporter. This Arabidopsis thaliana (Mouse-ear cress) protein is Sugar transporter ERD6-like 11.